Consider the following 481-residue polypeptide: Subtilisin-like protease 1 (481 aa).

Positions 1–19 (MGVFRFISISLAAVSAANA) are cleaved as a signal peptide. Residues 20–116 (AQILSMPHAQ…VEPDTIISVH (97 aa)) constitute a propeptide that is removed on maturation. Positions 34-115 (SYIVMMKDDT…FVEPDTIISV (82 aa)) constitute an Inhibitor I9 domain. Residues 126–400 (SWGLARISSS…NVLINNGGAK (275 aa)) enclose the Peptidase S8 domain. Active-site charge relay system residues include aspartate 158 and histidine 190. Residues 175-198 (GSNQVNDGDDNDRSGHGTHTSGTM) form a disordered region. Asparagine 251 carries N-linked (GlcNAc...) asparagine glycosylation. Residues 281–312 (GNDNTDARSSSPASEPSVCTVGASAEDDSRSS) are disordered. A compositionally biased stretch (polar residues) spans 282 to 294 (NDNTDARSSSPAS). Serine 345 serves as the catalytic Charge relay system. Positions 379 to 455 (ASISDVGPGT…HPHTPFPGGD (77 aa)) are disordered. Residues 424 to 450 (PQQPAPGEPSTPAPAPMPPTPQHPHTP) show a composition bias toward pro residues.

It belongs to the peptidase S8 family.

Its subcellular location is the secreted. Its function is as follows. Secreted subtilisin-like serine protease with keratinolytic activity that contributes to pathogenicity. The protein is Subtilisin-like protease 1 (SUB1) of Arthroderma gypseum (strain ATCC MYA-4604 / CBS 118893) (Microsporum gypseum).